Reading from the N-terminus, the 794-residue chain is Signal transducer and activator of transcription 5A (794 aa).

Tyrosine 90 is modified (phosphotyrosine). 2 positions are modified to phosphoserine: serine 128 and serine 193. In terms of domain architecture, SH2 spans 589–686 (WNDGAILGFV…EVFSKYYTPV (98 aa)). Residue tyrosine 682 is modified to Phosphotyrosine. Tyrosine 694 is modified (phosphotyrosine; by JAK2). The tract at residues 773-794 (DSLDSRLSPPAGLFTSARGSLS) is disordered. Serine 780 is subject to Phosphoserine.

This sequence belongs to the transcription factor STAT family. In terms of assembly, forms a homodimer or a heterodimer with a related family member. Binds NR3C1. Interacts with NCOA1 and SOCS7. Interacts with ERBB4. Interacts with EBF4. Interacts with CD69. Tyrosine phosphorylated in response to KITLG/SCF, IL2, IL3, IL7, IL15, CSF2/GMCSF, GH1, PRL, EPO and THPO. Activated KIT promotes phosphorylation on tyrosine residues and subsequent translocation to the nucleus. Tyrosine phosphorylated in response to constitutively activated FGFR1, FGFR2, FGFR3 and FGFR4. Tyrosine phosphorylation is required for DNA-binding activity and dimerization. Serine phosphorylation is also required for maximal transcriptional activity. Tyrosine phosphorylated in response to signaling via activated FLT3; wild-type FLT3 results in much weaker phosphorylation than constitutively activated mutant FLT3. Alternatively, can be phosphorylated by JAK2 at Tyr-694. Post-translationally, ISGylated.

The protein resides in the cytoplasm. Its subcellular location is the nucleus. Carries out a dual function: signal transduction and activation of transcription. Mediates cellular responses to the cytokine KITLG/SCF and other growth factors. Mediates cellular responses to ERBB4. May mediate cellular responses to activated FGFR1, FGFR2, FGFR3 and FGFR4. Binds to the GAS element and activates PRL-induced transcription. Regulates the expression of milk proteins during lactation. This is Signal transducer and activator of transcription 5A (STAT5A) from Homo sapiens (Human).